Here is a 288-residue protein sequence, read N- to C-terminus: MTSFTVSPPPHIKKKIFIKNLIWSRIVALLPISAAAVYFFGFAALGNIIASILGAVGIEFVIQKAFNKKLTIMDGNAIYLGLLLALICPPTLPAWMIFIGGAFAVGVGKHAFGGIGSYTFHPSLAAWVFLSLAWAQDMLPGTIPILSSFSDLILENGAGFLTDVSPILVLLAGVILILVKYIEWRIPLSYLLTTVILALVLGDPLAYVVSGTFLLGVFFIATETVTSPVTQNGRIVYGILCGFLTVIYGYFSGNYVWGTLYALLLSNAVAPFIELKTLPKPMGGVANE.

9 consecutive transmembrane segments (helical) span residues 26-46 (IVAL…AALG), 47-67 (NIIA…KAFN), 80-100 (LGLL…IFIG), 101-121 (GAFA…YTFH), 126-146 (AWVF…IPIL), 159-179 (GFLT…LILV), 200-220 (VLGD…VFFI), 235-255 (IVYG…SGNY), and 256-276 (VWGT…IELK).

It belongs to the NqrB/RnfD family. As to quaternary structure, the Rnf complex is probably composed of eight subunits, including RnfA, RnfB, RnfC, RnfD, RnfE and RnfG. Requires FMN as cofactor.

The protein resides in the cell membrane. Functionally, part of a membrane-bound complex that couples electron transfer with translocation of ions across the membrane. Catalyzes Na(+) transport, most probably coupled to electron transfer from reduced ferredoxin to methanophenazine and heterodisulfide reductase. Involved in heterodisulfide reduction during methanogenesis from acetate. In Methanosarcina acetivorans (strain ATCC 35395 / DSM 2834 / JCM 12185 / C2A), this protein is Ion-translocating oxidoreductase complex subunit D.